The following is a 252-amino-acid chain: Thiamine thiazole synthase (252 aa).

Residues serine 35, 54-55 (EK), glycine 62, valine 126, and 152-154 (HVD) each bind NAD(+). Residues aspartate 154 and histidine 169 each contribute to the Fe cation site. Position 217 (methionine 217) interacts with NAD(+). Arginine 227 provides a ligand contact to glycine.

This sequence belongs to the THI4 family. As to quaternary structure, homooctamer; tetramer of dimers. Fe(2+) serves as cofactor.

The catalysed reaction is hydrogen sulfide + glycine + NAD(+) = ADP-5-ethyl-4-methylthiazole-2-carboxylate + nicotinamide + 3 H2O + H(+). It functions in the pathway cofactor biosynthesis; thiamine diphosphate biosynthesis. Its function is as follows. Involved in the biosynthesis of the thiazole moiety of thiamine. Catalyzes the conversion of NAD and glycine to adenosine diphosphate 5-(2-hydroxyethyl)-4-methylthiazole-2-carboxylate (ADT), an adenylated thiazole intermediate, using free sulfide as a source of sulfur. This is Thiamine thiazole synthase from Pyrococcus horikoshii (strain ATCC 700860 / DSM 12428 / JCM 9974 / NBRC 100139 / OT-3).